Reading from the N-terminus, the 515-residue chain is MGKISGSGTVAPHILVIFGASGDLAARKLIPSLWDLFEQELLPRTFGILGAGRTALSTESFRARLAEAVTKHAVRTPHDPARLTEFLQKIHYFSFDPTDSVAFADFATYVRTLDQSLHTEGNFIFYLATPPSLYETIPTQLAMHHLNREQGNFRRVVIEKPFGYNLETAQHLNASLRAHFQENQTYRIDHYLGKETVQNILVTRFANPLFEPTWNRTHIDYVEITASESLGVENRGGYYDQSGALRDMIQNHLLLLLGIIAMEAPAVVSSSRLRDEIVKVFDCLRPMGERDVMQHTVRAQYVAGKIRGVAVPGYLEESGVDPRSCTETFAALKCYIDNWRWMDVPFYLRTGKRLPTGVTEVIVHYRTLPIALFEHIERPCAREGNALVIRIQPDEGIQLKIDLKEPGAGFKTIPVSVDFQYSALTYSHLPSAYERLLLDCMNGDNTLYHRDDAVESAWRFIDPILAAWKSNKSPLLTYPAGSWGPKAADDLIKGSAPRWHHPSSTLLSDDFACRL.

Residues arginine 53 and lysine 160 each contribute to the NADP(+) site. Substrate is bound by residues histidine 190, lysine 194, glutamate 228, and aspartate 247. Histidine 252 (proton acceptor) is an active-site residue. Substrate is bound at residue lysine 352.

This sequence belongs to the glucose-6-phosphate dehydrogenase family.

It catalyses the reaction D-glucose 6-phosphate + NADP(+) = 6-phospho-D-glucono-1,5-lactone + NADPH + H(+). It participates in carbohydrate degradation; pentose phosphate pathway; D-ribulose 5-phosphate from D-glucose 6-phosphate (oxidative stage): step 1/3. In terms of biological role, catalyzes the oxidation of glucose 6-phosphate to 6-phosphogluconolactone. The chain is Glucose-6-phosphate 1-dehydrogenase from Treponema pallidum (strain Nichols).